A 301-amino-acid chain; its full sequence is Ubiquitin thioesterase OTU1 (301 aa).

The segment at 4–80 (KVTGAGINQV…TIESSDSNES (77 aa)) is UBX-like. Residues 109-229 (LSVHPVLDDN…GIHYDSLTMN (121 aa)) enclose the OTU domain. A cys-loop region spans residues 114-120 (VLDDNSC). Residue Asp-117 is part of the active site. Cys-120 functions as the Nucleophile in the catalytic mechanism. A Glycyl lysine isopeptide (Lys-Gly) (interchain with G-Cter in ubiquitin) cross-link involves residue Lys-160. The segment at 169–179 (ILKMESWGGAI) is variable-loop. The segment at 218 to 222 (FNGIH) is his-loop. Ile-221 lines the substrate pocket. Residue His-222 is part of the active site. The tract at residues 243–248 (DDVLTA) is S2 site. A C2H2-type zinc finger spans residues 270–294 (IKCNTCQMTFVGEREVARHAESTGH). Residue His-294 is part of the active site.

In terms of assembly, forms a complex composed of CDC48, NPL4, UFD1, DOA1, SHP1 and deubiquitinase OTU1; within the complex interacts with CDC48 and DOA1/UFD3.

The protein localises to the cytoplasm. Its subcellular location is the nucleus. It carries out the reaction Thiol-dependent hydrolysis of ester, thioester, amide, peptide and isopeptide bonds formed by the C-terminal Gly of ubiquitin (a 76-residue protein attached to proteins as an intracellular targeting signal).. Its function is as follows. Hydrolase that can remove conjugated ubiquitin from proteins and may therefore play an important regulatory role at the level of protein turnover by preventing degradation. Participates in the regulation of the ubiquitin conjugation pathway involving CDC48 by hindering multiubiquitination of substrates at the CDC48 chaperone. May be indirectly involved in PIS1 gene expression. This chain is Ubiquitin thioesterase OTU1 (OTU1), found in Saccharomyces cerevisiae (strain ATCC 204508 / S288c) (Baker's yeast).